We begin with the raw amino-acid sequence, 365 residues long: Red-sensitive opsin (365 aa).

Residues M1–V51 lie on the Extracellular side of the membrane. An N-linked (GlcNAc...) asparagine glycan is attached at N33. A helical transmembrane segment spans residues Y52 to A76. Residues T77 to N88 are Cytoplasmic-facing. The helical transmembrane segment at W89–Q113 threads the bilayer. Topologically, residues I114–E128 are extracellular. Cysteines 125 and 202 form a disulfide. The helical transmembrane segment at G129 to W148 threads the bilayer. Residues E149–L167 lie on the Cytoplasmic side of the membrane. The chain crosses the membrane as a helical span at residues A168–S191. Residues R192 to S217 lie on the Extracellular side of the membrane. Residues Y218 to I245 traverse the membrane as a helical segment. Over R246–R267 the chain is Cytoplasmic. Residues M268–A291 form a helical membrane-spanning segment. The Extracellular portion of the chain corresponds to F292–H299. A helical membrane pass occupies residues P300 to M324. K311 carries the N6-(retinylidene)lysine modification. The Cytoplasmic segment spans residues N325–A365. The disordered stretch occupies residues D342–A365. The span at E345–A365 shows a compositional bias: low complexity.

It belongs to the G-protein coupled receptor 1 family. Opsin subfamily. Phosphorylated on some or all of the serine and threonine residues present in the C-terminal region.

The protein resides in the membrane. In terms of biological role, visual pigments are the light-absorbing molecules that mediate vision. They consist of an apoprotein, opsin, covalently linked to cis-retinal. The sequence is that of Red-sensitive opsin (opn1lw1) from Xenopus laevis (African clawed frog).